Reading from the N-terminus, the 985-residue chain is Bifunctional glutamine synthetase adenylyltransferase/adenylyl-removing enzyme (985 aa).

An adenylyl removase region spans residues 1–460 (MSLPSLADFP…HFRQVIADPD (460 aa)). The adenylyl transferase stretch occupies residues 476–985 (GGEWLPLWEE…MRIWAQMGLS (510 aa)).

It belongs to the GlnE family. Requires Mg(2+) as cofactor.

The enzyme catalyses [glutamine synthetase]-O(4)-(5'-adenylyl)-L-tyrosine + phosphate = [glutamine synthetase]-L-tyrosine + ADP. It carries out the reaction [glutamine synthetase]-L-tyrosine + ATP = [glutamine synthetase]-O(4)-(5'-adenylyl)-L-tyrosine + diphosphate. Its function is as follows. Involved in the regulation of glutamine synthetase GlnA, a key enzyme in the process to assimilate ammonia. When cellular nitrogen levels are high, the C-terminal adenylyl transferase (AT) inactivates GlnA by covalent transfer of an adenylyl group from ATP to specific tyrosine residue of GlnA, thus reducing its activity. Conversely, when nitrogen levels are low, the N-terminal adenylyl removase (AR) activates GlnA by removing the adenylyl group by phosphorolysis, increasing its activity. The regulatory region of GlnE binds the signal transduction protein PII (GlnB) which indicates the nitrogen status of the cell. This Pseudomonas syringae pv. tomato (strain ATCC BAA-871 / DC3000) protein is Bifunctional glutamine synthetase adenylyltransferase/adenylyl-removing enzyme.